A 614-amino-acid chain; its full sequence is Afadin- and alpha-actinin-binding protein (614 aa).

Coiled-coil stretches lie at residues 131–227 (MDHL…IAMD) and 266–293 (RQKQ…SLLS). Ser290, Ser293, and Ser312 each carry phosphoserine. The disordered stretch occupies residues 292-317 (LSPQKKKPRERVDDSTGTVISDVEED). The stretch at 374–460 (ISRQDHEQET…RSFTEAAIRL (87 aa)) forms a coiled coil. Phosphoserine occurs at positions 536, 540, and 542.

It belongs to the ADIP family. In terms of assembly, interacts with afadin and alpha-actinin. Interacts with VAV2. Interacts with SSX2 and SSX3. Does not interact with SSX1 and SSX4. Interacts with PCM1. Interacts with WRAP73. As to expression, widely expressed, with the highest expression in brain, intermediate expression in kidney, testis, spinal cord, liver, heart, lung, skeletal muscle, ovary, fetal liver and fetal brain, and little to no expression in pancreas and spleen. All specific brain regions showed intermediate to high expression, with highest expression in amygdala. Also expressed in fetal tissues, mainly in liver and brain.

Its subcellular location is the cell junction. It localises to the adherens junction. It is found in the nucleus. The protein localises to the cytoplasm. The protein resides in the cytoskeleton. Its subcellular location is the microtubule organizing center. It localises to the centrosome. It is found in the centriolar satellite. The protein localises to the cilium basal body. Functionally, belongs to an adhesion system, which plays a role in the organization of homotypic, interneuronal and heterotypic cell-cell adherens junctions (AJs). May connect the nectin-afadin and E-cadherin-catenin system through alpha-actinin and may be involved in organization of the actin cytoskeleton at AJs through afadin and alpha-actinin. Involved in cell movement: localizes at the leading edge of moving cells in response to PDGF and is required for the formation of the leading edge and the promotion of cell movement, possibly via activation of Rac signaling. Acts as a centrosome maturation factor, probably by maintaining the integrity of the pericentriolar material and proper microtubule nucleation at mitotic spindle poles. The function seems to implicate at least in part WRAP73; the SSX2IP:WRAP73 complex is proposed to act as regulator of spindle anchoring at the mitotic centrosome. Involved in ciliogenesis. It is required for targeted recruitment of the BBSome, CEP290, RAB8, and SSTR3 to the cilia. This Homo sapiens (Human) protein is Afadin- and alpha-actinin-binding protein (SSX2IP).